A 529-amino-acid chain; its full sequence is Putative amidohydrolase YtcJ (529 aa).

The protein belongs to the metallo-dependent hydrolases superfamily.

The polypeptide is Putative amidohydrolase YtcJ (ytcJ) (Bacillus subtilis (strain 168)).